A 100-amino-acid chain; its full sequence is Omega-hexatoxin-Asp2b (100 aa).

An N-terminal signal peptide occupies residues 1–23; that stretch reads MKFSKLSITLAVILTQAVFVLCG. Residues 24–55 constitute a propeptide that is removed on maturation; that stretch reads MKNEDFMEKGLESNELHDAIKKPVNSGKPDTE. 3 cysteine pairs are disulfide-bonded: cysteine 60–cysteine 73, cysteine 66–cysteine 79, and cysteine 72–cysteine 84.

This sequence belongs to the neurotoxin 15 family. 02 (omega-actx) subfamily. Expressed by the venom gland.

The protein localises to the secreted. Potent inhibitor of insect, but not mammalian, voltage-gated calcium channels (Cav). The chain is Omega-hexatoxin-Asp2b from Atrax sp. (strain Illawarra) (Funnel-web spider).